The sequence spans 223 residues: Adenylate kinase 4, mitochondrial (223 aa).

A ribonucleoside 5'-triphosphate is bound at residue 15-20 (GSGKGT). The interval 35 to 64 (SSGHFLRENIKASTEVGEMAKQYIEKSLLV) is NMP. AMP contacts are provided by S36 and R41. An N6-succinyllysine modification is found at K60. AMP-binding positions include 62–64 (LLV), 89–92 (GFPR), and Q96. The LID stretch occupies residues 125–162 (RRWIHPPSGRVYNLDFNPPHVHGIDDVTGEPLVQQEDD). Residues R126 and 135-136 (VY) contribute to the a ribonucleoside 5'-triphosphate site. R170 lines the AMP pocket. K175 carries the post-translational modification N6-acetyllysine. N6-acetyllysine; alternate occurs at positions 179 and 186. N6-succinyllysine; alternate is present on residues K179 and K186. T199 lines the a ribonucleoside 5'-triphosphate pocket.

The protein belongs to the adenylate kinase family. AK3 subfamily. Monomer. Interacts with SLC25A5/ANT2. As to expression, highly expressed in kidney, moderately expressed in heart and liver and weakly expressed in brain.

Its subcellular location is the mitochondrion matrix. The catalysed reaction is a ribonucleoside 5'-phosphate + ATP = a ribonucleoside 5'-diphosphate + ADP. It catalyses the reaction AMP + ATP = 2 ADP. The enzyme catalyses GTP + AMP = GDP + ADP. It carries out the reaction CMP + ATP = CDP + ADP. The catalysed reaction is GTP + CMP = CDP + GDP. It catalyses the reaction dAMP + ATP = dADP + ADP. The enzyme catalyses dCMP + ATP = dCDP + ADP. It carries out the reaction a 2'-deoxyribonucleoside 5'-diphosphate + ATP = a 2'-deoxyribonucleoside 5'-triphosphate + ADP. The catalysed reaction is a ribonucleoside 5'-diphosphate + ATP = a ribonucleoside 5'-triphosphate + ADP. It catalyses the reaction GDP + ATP = GTP + ADP. The enzyme catalyses CDP + GTP = CTP + GDP. It carries out the reaction CDP + ATP = CTP + ADP. The catalysed reaction is UDP + ATP = UTP + ADP. It catalyses the reaction GTP + UDP = UTP + GDP. The enzyme catalyses dADP + GTP = dATP + GDP. It carries out the reaction dCDP + GTP = dCTP + GDP. The catalysed reaction is dCDP + ATP = dCTP + ADP. It catalyses the reaction dGDP + ATP = dGTP + ADP. The enzyme catalyses dTDP + GTP = dTTP + GDP. It carries out the reaction dTDP + ATP = dTTP + ADP. Functionally, broad-specificity mitochondrial nucleoside phosphate kinase involved in cellular nucleotide homeostasis by catalyzing nucleoside-phosphate interconversions. Similar to other adenylate kinases, preferentially catalyzes the phosphorylation of the nucleoside monophosphate AMP with ATP as phosphate donor to produce ADP. Phosphorylates only AMP when using GTP as phosphate donor. In vitro, can also catalyze the phosphorylation of CMP, dAMP and dCMP and use GTP as an alternate phosphate donor. Moreover, exhibits a diphosphate kinase activity, producing ATP, CTP, GTP, UTP, TTP, dATP, dCTP and dGTP from the corresponding diphosphate substrates with either ATP or GTP as phosphate donors. Plays a role in controlling cellular ATP levels by regulating phosphorylation and activation of the energy sensor protein kinase AMPK. Plays a protective role in the cellular response to oxidative stress. This Homo sapiens (Human) protein is Adenylate kinase 4, mitochondrial.